The following is a 170-amino-acid chain: Sec-independent protein translocase protein TATA, chloroplastic (170 aa).

A chloroplast-targeting transit peptide spans 1-61; it reads MGIPVVVPVA…GGSGGDLAAV (61 aa). Residues 62–84 are Lumenal-facing; the sequence is AASVAARPRRAGSGGGGALGCKC. Residues 85 to 105 traverse the membrane as a helical segment; it reads LFGLGVPELAVIAGVAALVFG. At 106–170 the chain is on the stromal side; sequence PKQLPEIGRS…LEASSSKESA (65 aa). The segment covering 130–139 has biased composition (basic and acidic residues); that stretch reads FETELKKEPG. The interval 130–170 is disordered; the sequence is FETELKKEPGEGGDQPPPATPTAVSGGEEKGLEASSSKESA.

This sequence belongs to the TatA/E family. In thylakoid membranes, TATC and TATB form a large receptor complex, containing about eight TATC-TATB pairs, which binds the precursor protein. Twin arginine signal peptide promotes pH-triggered docking of TATA oligomers to TATC-TATB receptor complex, inducing a conformational switch of TATA that results in activation of the translocase. TATA dissociates from TATC-TATB upon completion of translocation.

It localises to the plastid. Its subcellular location is the chloroplast thylakoid membrane. Part of the twin-arginine translocation (Tat) system that transports large folded proteins containing a characteristic twin-arginine motif in their signal peptide across the thylakoid membrane. Involved in delta pH-dependent protein transport required for chloroplast development, especially thylakoid membrane formation. TATC and TATB mediate precursor recognition, whereas TATA facilitates translocation. In Zea mays (Maize), this protein is Sec-independent protein translocase protein TATA, chloroplastic.